The sequence spans 358 residues: MKFSQVATTAAIFAGLTTAEIAYVTQTRGVTVGETATVATTVTVGATVTGGDQGQDQVQQSAAPEAGDIQQSAVPEADDIQQSAVPEAEPTADADGGNGIAITEVFTTTIMGQEIVYSGVYYSYGEEHTYGDVQVQTLTIGGGGFPSDDQYPTTEVSAEASPSAVTTSSAVATPDAKVPDSTKDASQPAATTASGSSSGSNDFSGVKDTQFAQQILDAHNKKRARHGVPDLTWDATVYEYAQKFADQYSCSGNLQHSGGKYGENLAVGYADGAAALQAWYEEAGKDGLSYSYGSSSVYNHFTQVVWKSTTKLGCAYKDCRAQNWGLYVVCSYDPAGNVMGTDPKTGKSYMAENVLRPQ.

Positions 1–19 (MKFSQVATTAAIFAGLTTA) are cleaved as a signal peptide. Composition is skewed to low complexity over residues 48–63 (VTGG…QSAA), 153–174 (TTEV…VATP), and 189–200 (AATTASGSSSGS). Disordered stretches follow at residues 48–98 (VTGG…DGGN) and 144–203 (GFPS…SNDF). Positions 216–332 (LDAHNKKRAR…NWGLYVVCSY (117 aa)) constitute an SCP domain.

It belongs to the CRISP family.

It localises to the secreted. Secreted protein that acts as a virulence factor during infections such as in posttraumatic corneal infections. Acts as an important antigen in patients with systemic candidiasis and plays a role in the protection against phagocyte attack. The sequence is that of Secreted protein RBT4 (RBT4) from Candida albicans (strain SC5314 / ATCC MYA-2876) (Yeast).